A 518-amino-acid polypeptide reads, in one-letter code: MAKQTFLKGTLILIAAGMVTRMLGFVNRVVIARFIGEEGVGLYMMAAPTFFLATTLTQFGLPVAISKLVAEASARGDHQKTKNILVMSLTITGVLSLIFTPLFLFFAPVMAETMLTDKRTLYPLLAITPVVPIIAISSVLRGYFQGKQNMNPLAMSQVLEQVVRISLVAVCTTIFLPYGIEYAAAGAMLSSVAGELASLLYLFVCFKYKKTIKIRKHFLQSIKNGKQTFTQLMSVSLPTTGSRFIGNLSWFFEPIVVAQSLAIAGVATVAATKQYGELTGFAMTLLTLPSFITYSLSTALVPAISEGMEQKKLQVVEYRLEQAMRLCLLSGGISVVILFVFADELMRVMYGSSGAAVFIKVMAPFFLLYYFQGPLQAVLQALNLAGAAMMNSLIGALVKTGLIFVLATRPSLGIMGAALAIVTGMVLVTLLHAATVSKVLPISIKIKEYALSFAVIVICGFISSAIKQYISFGASEAVNLAGWIAASAAIYMILLLVFRLIKKDELRRIPIIGRLIIR.

Helical transmembrane passes span 6–26, 45–65, 91–111, 120–140, 165–185, 186–206, 250–270, 281–301, 326–346, 348–368, 387–407, 411–431, 446–466, and 478–498; these read FLKGTLILIAAGMVTRMLGFV, MAAPTFFLATTLTQFGLPVAI, ITGVLSLIFTPLFLFFAPVMA, TLYPLLAITPVVPIIAISSVL, ISLVAVCTTIFLPYGIEYAAA, GAMLSSVAGELASLLYLFVCF, WFFEPIVVAQSLAIAGVATVA, FAMTLLTLPSFITYSLSTALV, LCLLSGGISVVILFVFADELM, VMYGSSGAAVFIKVMAPFFLL, AAMMNSLIGALVKTGLIFVLA, SLGIMGAALAIVTGMVLVTLL, IKEYALSFAVIVICGFISSAI, and VNLAGWIAASAAIYMILLLVF.

Belongs to the polysaccharide synthase family.

The protein localises to the cell membrane. In terms of biological role, involved, directly or indirectly, in spore cortex biosynthesis. Affects only indirectly the expression of late sporulation genes. This chain is Stage V sporulation protein B (spoVB), found in Bacillus subtilis (strain 168).